The primary structure comprises 1103 residues: MSQSKDKKKFVGGGGGGGGNNSGGGGYGSPKHNNNNNNRNSSNNKSPHQSHHNQQHHQQQQQQQQQQQQQQQQPFDSLTAMKERTVFMSMSLVGQNVSVTLKNGDVYEGILHTTSTSTGSSGGGWGVALKMARKKDTNNRVITTLPLPLVIIEAKDFLQITATGVVLDHYRDSFMNRDQQSFITDTELSGFDGNLKERELTPWTPDPSVGESLDDFAANSEAKKPANWDQFETNEKLFGVRTTYEEEIYTTRLDRDSEFYKINQSVAEKKAQEIENEKSGNIHLLEERGFVEGADYDEEERYSSVVRKGLLPTSTTSTTTSPPTQNPTPSSSVYIPPSKRNNNNNTPSTPSVTSPPIVDKKHQQTHQDKKQTQQQQQQQQQQQQQQQQQQQQQQQQQQQQQTQPTTTATATASTSTSTTTTTNESPSSSSTSSTPSTPSTPKNITTTTATTSTNNTPTATNTNVNSPLGDRESPTISKLRLHQSTIDQDVMGSPRENLSPRSVAYTRYRQILSEPTNKSMNKSGSNISTTPVNGSGNVGPNGTPLLSSVHSDQAPKSPVPTIVSNHGLVKALSLELATPTVPEKFVNDFNNFKLKINNVDRGSETQGLKSFSSNLVIKSKSRPGSPLIGSGSPRPTPTQLSLSGSSTSTNTSTTSPPTTNTTTTTTTATNSTTPSTTEDDKSTTTPITTTILTENKSDDKEKEKEKEKEKVDEKEKEKEKEKSDEKDKDQSSTLVEKKDESSSSSNTTTTTTNTTNNNNNNTTTVTKLSKLKLNPNAKEFVPVVVNKPQPSFKSTTESNTDSVTPINEIYYDSMRKRQLQPESPDQVSLYWVDPFYPRYEEDPYAAAYQMRAHHHMVGHQPPPQLQFNPQFYSQQGHPQLQPHHHMVPPQLQQVPPGVNVHTMKPPGSLQPGGGGVVQPQGIVQPQGIVQPQGGVVQPSAGGAPKTMYQQQQQQQQQTGQPGGPMGVQRGGHLPPQQQPQQQQQQPPPQFIQGIPPGANLVISNGPPNQPFVFQGAHPPYAVPHPQYPMPPQGIQGGNKRFYQPPPQGYPQVQPMIIPQQGQVVSQNSPQQDSPSNRLNQQVPPYSYMTHPPRGYHPNENQYH.

Positions 1–10 (MSQSKDKKKF) are enriched in basic residues. Residues 1 to 75 (MSQSKDKKKF…QQQQQQQQPF (75 aa)) form a disordered region. A compositionally biased stretch (gly residues) spans 11-28 (VGGGGGGGGNNSGGGGYG). 2 stretches are compositionally biased toward low complexity: residues 33 to 44 (NNNNNNRNSSNN) and 56 to 73 (HHQQ…QQQQ). Residues 84-166 (RTVFMSMSLV…FLQITATGVV (83 aa)) enclose the Sm domain. Residues 258-287 (EFYKINQSVAEKKAQEIENEKSGNIHLLEE) adopt a coiled-coil conformation. Disordered stretches follow at residues 305 to 474 (VVRK…RESP), 516 to 557 (TNKS…APKS), 615 to 763 (LVIK…NNTT), 901 to 920 (HTMK…VQPQ), and 930 to 1103 (QPQG…NQYH). Positions 312 to 356 (PTSTTSTTTSPPTQNPTPSSSVYIPPSKRNNNNNTPSTPSVTSPP) are enriched in low complexity. The segment covering 358-371 (VDKKHQQTHQDKKQ) has biased composition (basic and acidic residues). Residues 366–403 (HQDKKQTQQQQQQQQQQQQQQQQQQQQQQQQQQQQQTQ) are a coiled coil. Residues 372–463 (TQQQQQQQQQ…NNTPTATNTN (92 aa)) are compositionally biased toward low complexity. Positions 516–529 (TNKSMNKSGSNIST) are enriched in polar residues. Low complexity-rich tracts occupy residues 530–544 (TPVN…NGTP), 637–676 (PTQL…TPST), and 683–694 (TTTPITTTILTE). Residues 691-730 (ILTENKSDDKEKEKEKEKEKVDEKEKEKEKEKSDEKDKDQ) adopt a coiled-coil conformation. A compositionally biased stretch (basic and acidic residues) spans 695-741 (NKSDDKEKEKEKEKEKVDEKEKEKEKEKSDEKDKDQSSTLVEKKDES). Residues 742-763 (SSSSNTTTTTTNTTNNNNNNTT) show a composition bias toward low complexity. Residues 930-957 (QPQGGVVQPSAGGAPKTMYQQQQQQQQQ) are compositionally biased toward low complexity. Residues 960 to 969 (QPGGPMGVQR) are compositionally biased toward gly residues. The span at 974–984 (PPQQQPQQQQQ) shows a compositional bias: low complexity. The span at 1020 to 1031 (YAVPHPQYPMPP) shows a compositional bias: pro residues. Positions 1062–1076 (QVVSQNSPQQDSPSN) are enriched in low complexity.

Belongs to the ataxin-2 family.

This Dictyostelium discoideum (Social amoeba) protein is Ataxin-2 homolog (atxn2).